Reading from the N-terminus, the 95-residue chain is DNA/RNA-binding protein Alba (95 aa).

N6-acetyllysine is present on Lys-13.

It belongs to the histone-like Alba family. Post-translationally, acetylated. Acetylation at Lys-13 decreases DNA-binding affinity.

It is found in the cytoplasm. The protein localises to the chromosome. In terms of biological role, binds double-stranded DNA tightly but without sequence specificity. Involved in DNA compaction. The polypeptide is DNA/RNA-binding protein Alba (Nitrosopumilus maritimus (strain SCM1)).